The chain runs to 474 residues: Glutamate--tRNA ligase (474 aa).

The 'HIGH' region motif lies at 10–20 (PSPTGYLHIGG). Residues C107, C109, C134, and D136 each contribute to the Zn(2+) site. A 'KMSKS' region motif is present at residues 244 to 248 (RLSKR). K247 is a binding site for ATP.

The protein belongs to the class-I aminoacyl-tRNA synthetase family. Glutamate--tRNA ligase type 1 subfamily. As to quaternary structure, monomer. Requires Zn(2+) as cofactor.

The protein localises to the cytoplasm. It catalyses the reaction tRNA(Glu) + L-glutamate + ATP = L-glutamyl-tRNA(Glu) + AMP + diphosphate. Catalyzes the attachment of glutamate to tRNA(Glu) in a two-step reaction: glutamate is first activated by ATP to form Glu-AMP and then transferred to the acceptor end of tRNA(Glu). The sequence is that of Glutamate--tRNA ligase from Anaeromyxobacter dehalogenans (strain 2CP-C).